The sequence spans 280 residues: Putative S-adenosyl-L-methionine-dependent methyltransferase FRAAL3836 (280 aa).

Residues Asp121 and 150–151 (DL) each bind S-adenosyl-L-methionine.

It belongs to the UPF0677 family.

Functionally, exhibits S-adenosyl-L-methionine-dependent methyltransferase activity. This is Putative S-adenosyl-L-methionine-dependent methyltransferase FRAAL3836 from Frankia alni (strain DSM 45986 / CECT 9034 / ACN14a).